A 178-amino-acid polypeptide reads, in one-letter code: Caveolin-1 (178 aa).

At S2 the chain carries N-acetylserine. At S2 the chain carries Phosphoserine. Residues 2 to 94 (SGGKYVDSEG…WKASFTTFTV (93 aa)) form a required for homooligomerization region. Over 2–104 (SGGKYVDSEG…TKYWFYRLLS (103 aa)) the chain is Cytoplasmic. K5 carries the post-translational modification N6-acetyllysine; alternate. A Glycyl lysine isopeptide (Lys-Gly) (interchain with G-Cter in ubiquitin); alternate cross-link involves residue K5. Y6 carries the phosphotyrosine modification. S9 carries the post-translational modification Phosphoserine. At Y14 the chain carries Phosphotyrosine; by ABL1. At Y25 the chain carries Phosphotyrosine. Glycyl lysine isopeptide (Lys-Gly) (interchain with G-Cter in ubiquitin) cross-links involve residues K26, K30, K39, K47, and K57. Residues 82-94 (DGIWKASFTTFTV) are interaction with CAVIN3. An intramembrane region (helical) is located at residues 105–125 (ALFGIPMALIWGIYFAILSFL). Residues 126 to 178 (HIWAVVPCIKSFLIEIQCVSRVYSIYVHTFCDPFFEAVGKIFSSIRINMQKEI) lie on the Cytoplasmic side of the membrane. The interacts with SPRY1, SPRY2, SPRY3 and SPRY4 stretch occupies residues 131 to 142 (VPCIKSFLIEIQ). Residues C133, C143, and C156 are each lipidated (S-palmitoyl cysteine). The interval 149–160 (SIYVHTFCDPFF) is interacts with SPRY1, SPRY2, and SPRY4. The interval 167–178 (FSSIRINMQKEI) is interacts with SPRY1, SPRY2, SPRY3 and SPRY4.

It belongs to the caveolin family. As to quaternary structure, homooligomer. Interacts with GLIPR2. Interacts with NOSTRIN. Interacts with SNAP25 and STX1A. Interacts (via the N-terminus) with DPP4; the interaction is direct. Interacts with CTNNB1, CDH1 and JUP. Interacts with PACSIN2; this interaction induces membrane tubulation. Interacts with SLC7A9. Interacts with BMX and BTK. Interacts with TGFBR1. Interacts with CAVIN3 (via leucine-zipper domain) in a cholesterol-sensitive manner. Interacts with CAVIN1. Interacts with EHD2 in a cholesterol-dependent manner. Forms a ternary complex with UBXN6 and VCP; mediates CAV1 targeting to lysosomes for degradation. Interacts with ABCG1; this interaction regulates ABCG1-mediated cholesterol efflux. Interacts with NEU3; this interaction enhances NEU3 sialidase activity within caveola. Interacts (via C-terminus) with SPRY1, SPRY2 (via C-terminus), SPRY3, and SPRY4. Interacts with IGFBP5; this interaction allows trafficking of IGFBP5 from the plasma membrane to the nucleus. Post-translationally, phosphorylated at Tyr-14 by ABL1 in response to oxidative stress. Ubiquitinated. Undergo monoubiquitination and multi- and/or polyubiquitination. Monoubiquitination of N-terminal lysines promotes integration in a ternary complex with UBXN6 and VCP which promotes oligomeric CAV1 targeting to lysosomes for degradation. Ubiquitinated by ZNRF1; leading to degradation and modulation of the TLR4-mediated immune response.

The protein localises to the golgi apparatus membrane. The protein resides in the cell membrane. It is found in the membrane. It localises to the caveola. Its subcellular location is the membrane raft. Its function is as follows. May act as a scaffolding protein within caveolar membranes. Forms a stable heterooligomeric complex with CAV2 that targets to lipid rafts and drives caveolae formation. Mediates the recruitment of CAVIN proteins (CAVIN1/2/3/4) to the caveolae. Interacts directly with G-protein alpha subunits and can functionally regulate their activity. Involved in the costimulatory signal essential for T-cell receptor (TCR)-mediated T-cell activation. Its binding to DPP4 induces T-cell proliferation and NF-kappa-B activation in a T-cell receptor/CD3-dependent manner. Recruits CTNNB1 to caveolar membranes and may regulate CTNNB1-mediated signaling through the Wnt pathway. Negatively regulates TGFB1-mediated activation of SMAD2/3 by mediating the internalization of TGFBR1 from membrane rafts leading to its subsequent degradation. Binds 20(S)-hydroxycholesterol (20(S)-OHC). The protein is Caveolin-1 (CAV1) of Mustela putorius furo (European domestic ferret).